Here is a 156-residue protein sequence, read N- to C-terminus: Large ribosomal subunit protein uL30 (156 aa).

The protein belongs to the universal ribosomal protein uL30 family. As to quaternary structure, part of the 50S ribosomal subunit.

This is Large ribosomal subunit protein uL30 from Sulfolobus acidocaldarius (strain ATCC 33909 / DSM 639 / JCM 8929 / NBRC 15157 / NCIMB 11770).